A 305-amino-acid chain; its full sequence is Glycine--tRNA ligase alpha subunit (305 aa).

The protein belongs to the class-II aminoacyl-tRNA synthetase family. In terms of assembly, tetramer of two alpha and two beta subunits.

The protein resides in the cytoplasm. It carries out the reaction tRNA(Gly) + glycine + ATP = glycyl-tRNA(Gly) + AMP + diphosphate. In Heliobacterium modesticaldum (strain ATCC 51547 / Ice1), this protein is Glycine--tRNA ligase alpha subunit.